A 94-amino-acid chain; its full sequence is Co-chaperonin GroES (94 aa).

The protein belongs to the GroES chaperonin family. In terms of assembly, heptamer of 7 subunits arranged in a ring. Interacts with the chaperonin GroEL.

Its subcellular location is the cytoplasm. In terms of biological role, together with the chaperonin GroEL, plays an essential role in assisting protein folding. The GroEL-GroES system forms a nano-cage that allows encapsulation of the non-native substrate proteins and provides a physical environment optimized to promote and accelerate protein folding. GroES binds to the apical surface of the GroEL ring, thereby capping the opening of the GroEL channel. The polypeptide is Co-chaperonin GroES (Staphylococcus epidermidis (strain ATCC 35984 / DSM 28319 / BCRC 17069 / CCUG 31568 / BM 3577 / RP62A)).